A 917-amino-acid polypeptide reads, in one-letter code: Autophagy-related protein 9 (917 aa).

The Cytoplasmic segment spans residues M1–R226. Disordered stretches follow at residues R16–I37 and L119–P177. A helical transmembrane segment spans residues I227–V247. Residues D248 to N275 lie on the Lumenal side of the membrane. An N-linked (GlcNAc...) asparagine glycan is attached at N269. A helical transmembrane segment spans residues V276–L296. Residues R297 to R442 are Cytoplasmic-facing. Residues F443 to L463 lie within the membrane without spanning it. Topologically, residues V464 to S539 are cytoplasmic. Residues I540–I560 form a helical membrane-spanning segment. Topologically, residues T561 to R564 are lumenal. The chain crosses the membrane as a helical span at residues S565–S585. Residues D586–Q633 lie on the Cytoplasmic side of the membrane. N6-acetyllysine is present on K621. An intramembrane segment occupies I634–P654. Over N655–R917 the chain is Cytoplasmic. The interval D854 to Q895 is disordered. Over residues S875–Q895 the composition is skewed to polar residues.

It belongs to the ATG9 family. Homotrimer; forms a homotrimer with a central pore that forms a path between the two membrane leaflets. Interacts with HAT1. In terms of processing, acetylated by HAT1 at Lys-621, which increases the ability to bind vesicles during nutrient starvation induction. Phosphorylated by ATG1. ATG1 phosphorylation is required for preautophagosome elongation.

The protein localises to the preautophagosomal structure membrane. Its subcellular location is the cytoplasmic vesicle membrane. It is found in the vacuole membrane. It localises to the golgi apparatus membrane. The protein resides in the endoplasmic reticulum membrane. It catalyses the reaction a 1,2-diacyl-sn-glycero-3-phosphocholine(in) = a 1,2-diacyl-sn-glycero-3-phosphocholine(out). The enzyme catalyses a 1,2-diacyl-sn-glycero-3-phospho-L-serine(in) = a 1,2-diacyl-sn-glycero-3-phospho-L-serine(out). It carries out the reaction a 1,2-diacyl-sn-glycero-3-phosphoethanolamine(in) = a 1,2-diacyl-sn-glycero-3-phosphoethanolamine(out). The catalysed reaction is a 1,2-diacyl-sn-glycero-3-phospho-(1D-myo-inositol-3-phosphate)(in) = a 1,2-diacyl-sn-glycero-3-phospho-(1D-myo-inositol-3-phosphate)(out). Functionally, phospholipid scramblase involved in autophagy and cytoplasm to vacuole transport (Cvt) vesicle formation. Cycles between the preautophagosomal structure/phagophore assembly site (PAS) and the cytoplasmic vesicle pool and supplies membrane for the growing autophagosome. Lipid scramblase activity plays a key role in preautophagosomal structure/phagophore assembly by distributing the phospholipids that arrive through ATG2 from the cytoplasmic to the luminal leaflet of the bilayer, thereby driving autophagosomal membrane expansion. Required for mitophagy. Also involved in endoplasmic reticulum-specific autophagic process and is essential for the survival of cells subjected to severe ER stress. Different machineries are required for anterograde trafficking to the PAS during either the Cvt pathway or bulk autophagy and for retrograde trafficking. Plays a role in appressorium formation and pathogenicity. The protein is Autophagy-related protein 9 of Pyricularia oryzae (strain 70-15 / ATCC MYA-4617 / FGSC 8958) (Rice blast fungus).